The primary structure comprises 226 residues: 7-cyano-7-deazaguanine synthase (226 aa).

8 to 18 (ISGGLDSTTCL) is an ATP binding site. Zn(2+) is bound by residues C188, C198, C201, and C204.

It belongs to the QueC family. Zn(2+) is required as a cofactor.

It catalyses the reaction 7-carboxy-7-deazaguanine + NH4(+) + ATP = 7-cyano-7-deazaguanine + ADP + phosphate + H2O + H(+). Its pathway is purine metabolism; 7-cyano-7-deazaguanine biosynthesis. Its function is as follows. Catalyzes the ATP-dependent conversion of 7-carboxy-7-deazaguanine (CDG) to 7-cyano-7-deazaguanine (preQ(0)). The polypeptide is 7-cyano-7-deazaguanine synthase (Coxiella burnetii (strain Dugway 5J108-111)).